A 1032-amino-acid polypeptide reads, in one-letter code: FACT complex subunit ctc-2 (1032 aa).

Positions 446 to 513 are disordered; it reads DEEEAQPTPK…QKEGLAKYAE (68 aa). A compositionally biased stretch (basic and acidic residues) spans 476-508; sequence LRSERNTTVDEDADKRRREHQKELAQKKQKEGL. Coiled-coil stretches lie at residues 485–506, 624–658, 785–805, and 949–1010; these read DEDADKRRREHQKELAQKKQKE, DRYADIANQISNLKRDAVKKEQEKKDMEDVVEQDK, RRRRAELDRLFKSFAEKIAEA, and EVEE…RKAK. A disordered region spans residues 943 to 1032; the sequence is NDSDDDEVEE…ERAAPKKRRK (90 aa). 2 stretches are compositionally biased toward acidic residues: residues 944–979 and 986–1004; these read DSDDDEVEEEEEESAFEIDESELEDASESSEEDSEY and EASDEAEDSEEEEGEDWDE.

This sequence belongs to the peptidase M24 family. SPT16 subfamily. In terms of assembly, forms a stable heterodimer with ctc-1/pob3. The dimer of ctc-1 and ctc-2 weakly associates with multiple molecules of nhp-1/nhp6 to form the FACT complex.

It localises to the nucleus. It is found in the chromosome. Its function is as follows. Component of the FACT complex, a general chromatin factor that acts to reorganize nucleosomes. The FACT complex is involved in multiple processes that require DNA as a template such as mRNA elongation, DNA replication and DNA repair. During transcription elongation the FACT complex acts as a histone chaperone that both destabilizes and restores nucleosomal structure. It facilitates the passage of RNA polymerase II and transcription by promoting the dissociation of one histone H2A-H2B dimer from the nucleosome, then subsequently promotes the reestablishment of the nucleosome following the passage of RNA polymerase II. The protein is FACT complex subunit ctc-2 (ctc-2) of Neurospora crassa (strain ATCC 24698 / 74-OR23-1A / CBS 708.71 / DSM 1257 / FGSC 987).